Here is a 238-residue protein sequence, read N- to C-terminus: Ras association domain-containing protein 3 (238 aa).

An N-acetylserine modification is found at serine 2. The tract at residues 26-48 (RAPQGKPRSGQQDVEKEKETHSY) is disordered. Positions 38-48 (DVEKEKETHSY) are enriched in basic and acidic residues. The Ras-associating domain occupies 79–186 (YTGFIKVQME…TLSFVLREHE (108 aa)). Residues 187–234 (IGEWEAFSLPELQNFLRILDKEEDEQLQNLKRRYTAYRQKLEEALREV) form the SARAH domain.

In terms of tissue distribution, widely expressed.

It is found in the cytoplasm. Its subcellular location is the cytoskeleton. This is Ras association domain-containing protein 3 (RASSF3) from Homo sapiens (Human).